The primary structure comprises 947 residues: Probable outer membrane protein pmp19 (947 aa).

Residues 1 to 19 (MKQMRLWGFLFLSSFCQVS) form the signal peptide. The region spanning 672-947 (IPLQHLCVFG…NAHAGLSLSF (276 aa)) is the Autotransporter domain.

This sequence belongs to the PMP outer membrane protein family.

The protein localises to the secreted. It is found in the cell wall. Its subcellular location is the cell outer membrane. This Chlamydia pneumoniae (Chlamydophila pneumoniae) protein is Probable outer membrane protein pmp19 (pmp19).